Consider the following 184-residue polypeptide: Large ribosomal subunit protein uL6 (184 aa).

Belongs to the universal ribosomal protein uL6 family. Part of the 50S ribosomal subunit.

In terms of biological role, this protein binds to the 23S rRNA, and is important in its secondary structure. It is located near the subunit interface in the base of the L7/L12 stalk, and near the tRNA binding site of the peptidyltransferase center. The sequence is that of Large ribosomal subunit protein uL6 from Thermococcus kodakarensis (strain ATCC BAA-918 / JCM 12380 / KOD1) (Pyrococcus kodakaraensis (strain KOD1)).